The chain runs to 265 residues: Diphthine synthase (265 aa).

S-adenosyl-L-methionine is bound by residues leucine 9, aspartate 85, isoleucine 88, 113–114, leucine 168, alanine 211, and histidine 236; that span reads TA.

Belongs to the diphthine synthase family. As to quaternary structure, homodimer.

It catalyses the reaction 2-[(3S)-amino-3-carboxypropyl]-L-histidyl-[translation elongation factor 2] + 3 S-adenosyl-L-methionine = diphthine-[translation elongation factor 2] + 3 S-adenosyl-L-homocysteine + 3 H(+). It functions in the pathway protein modification; peptidyl-diphthamide biosynthesis. Its function is as follows. S-adenosyl-L-methionine-dependent methyltransferase that catalyzes the trimethylation of the amino group of the modified target histidine residue in translation elongation factor 2 (EF-2), to form an intermediate called diphthine. The three successive methylation reactions represent the second step of diphthamide biosynthesis. This Halorubrum lacusprofundi (strain ATCC 49239 / DSM 5036 / JCM 8891 / ACAM 34) protein is Diphthine synthase.